The chain runs to 153 residues: Ribosomal RNA large subunit methyltransferase H (153 aa).

S-adenosyl-L-methionine contacts are provided by residues Leu71, Gly102, and 121–126 (LSRMTL).

It belongs to the RNA methyltransferase RlmH family. In terms of assembly, homodimer.

The protein localises to the cytoplasm. It catalyses the reaction pseudouridine(1915) in 23S rRNA + S-adenosyl-L-methionine = N(3)-methylpseudouridine(1915) in 23S rRNA + S-adenosyl-L-homocysteine + H(+). Its function is as follows. Specifically methylates the pseudouridine at position 1915 (m3Psi1915) in 23S rRNA. This is Ribosomal RNA large subunit methyltransferase H from Anaeromyxobacter sp. (strain Fw109-5).